We begin with the raw amino-acid sequence, 76 residues long: Conotoxin Vc6.3 (76 aa).

Residues 1 to 22 (MKLTCVMIVAVLFLTANTFATA) form the signal peptide. Residues 23–50 (DDPRNGLRDLFSIAHHEMKNPEASKLNE) constitute a propeptide that is removed on maturation. 3 disulfides stabilise this stretch: Cys52–Cys66, Cys59–Cys70, and Cys67–Cys75.

It belongs to the conotoxin O1 superfamily. As to expression, expressed by the venom duct.

It localises to the secreted. This Conus victoriae (Queen Victoria cone) protein is Conotoxin Vc6.3.